The chain runs to 955 residues: UPF0182 protein tll1193 (955 aa).

Transmembrane regions (helical) follow at residues 6–26 (VVPL…AIAL), 53–73 (WSVQ…FYGC), 98–118 (GLGL…LIVA), 163–183 (WLLG…VGLF), 186–206 (LGIL…PVVL), 240–260 (LWLV…YLLA), 280–300 (LQGL…LERY), 324–344 (LYGW…WSAI), and 354–374 (GPIA…ILIV).

Belongs to the UPF0182 family.

It is found in the cell membrane. This Thermosynechococcus vestitus (strain NIES-2133 / IAM M-273 / BP-1) protein is UPF0182 protein tll1193.